The chain runs to 365 residues: MRFSRVVSLVLLLVFTAVLTGAVKASLNDKPVGFASVPTADLPEGTVGGLGGEIVFVRTAEELEKYTTAEGKYVIVVDGTIVFEPKREIKVLSDKTIVGINDAKIVGGGLVIKDAQNVIIRNIHFEGFYMEDDPQGKKYDFDYINAENSHHIWIDHCTFVNGNDGAVDIKKYSNYITVSWCKFVDHDKVSLVGSSDKEDPEQAGQAYKVTYHHNYFKNCIQRMPRIRFGMAHVFNNFYSMGLRTGVSGNVFPIYGVASAMGAKVHVEGNYFMGYGAVMAEAGIAFLPTRIMGPVEGYLTLGEGDAKNKFYYCKEPETRPVEEGKPAFDPHEYYDYTLDPVDDVPKIVVDGAGAGKLVFEDLMSSK.

Positions 1–25 (MRFSRVVSLVLLLVFTAVLTGAVKA) are cleaved as a signal peptide. Residues Asp142, Asp164, and Asp168 each contribute to the Ca(2+) site. The PbH1 1 repeat unit spans residues 149–171 (SHHIWIDHCTFVNGNDGAVDIKK). Arg222 is an active-site residue. One copy of the PbH1 2 repeat lies at 261-287 (GAKVHVEGNYFMGYGAVMAEAGIAFLP).

It belongs to the polysaccharide lyase 1 family. As to quaternary structure, homotetramer. Requires Ca(2+) as cofactor.

The protein resides in the secreted. The catalysed reaction is eliminative cleavage of unsaturated trigalacturonate as the major product from the reducing end of polygalacturonic acid/pectate.. In terms of biological role, cleaves unsaturated trigalacturonate from pectin. Activity is highest towards polygalacturonic acid, activity on methylated pectins decreases with an increasing degree of methylation. The polypeptide is Pectate trisaccharide-lyase (Thermotoga sp. (strain RQ2)).